The sequence spans 964 residues: DNA primase (964 aa).

Residues 807–844 are disordered; sequence SAPSLPTLVGRGGGGEGGASSDYEEERAVGSDEEEDDD.

Belongs to the herpesviridae DNA primase family. In terms of assembly, associates with the helicase and the primase-associated factor to form the helicase-primase factor.

It is found in the host nucleus. Its function is as follows. Essential component of the helicase/primase complex. Unwinds the DNA at the replication forks and generates single-stranded DNA for both leading and lagging strand synthesis. The primase initiates primer synthesis and thereby produces large amount of short RNA primers on the lagging strand that the polymerase elongates using dNTPs. This is DNA primase (UL70) from Mus musculus (Mouse).